Consider the following 239-residue polypeptide: Geranylgeranylglyceryl phosphate synthase (239 aa).

Positions 18 and 45 each coordinate Mg(2+). Sn-glycerol 1-phosphate contacts are provided by residues 166 to 172, 197 to 198, and 219 to 220; these read YLEAGSG, GG, and GT.

Belongs to the GGGP/HepGP synthase family. Group II subfamily. Mg(2+) is required as a cofactor.

Its subcellular location is the cytoplasm. It carries out the reaction sn-glycerol 1-phosphate + (2E,6E,10E)-geranylgeranyl diphosphate = sn-3-O-(geranylgeranyl)glycerol 1-phosphate + diphosphate. The protein operates within membrane lipid metabolism; glycerophospholipid metabolism. Functionally, prenyltransferase that catalyzes the transfer of the geranylgeranyl moiety of geranylgeranyl diphosphate (GGPP) to the C3 hydroxyl of sn-glycerol-1-phosphate (G1P). This reaction is the first ether-bond-formation step in the biosynthesis of archaeal membrane lipids. The protein is Geranylgeranylglyceryl phosphate synthase of Pyrobaculum arsenaticum (strain DSM 13514 / JCM 11321 / PZ6).